A 917-amino-acid chain; its full sequence is Major intrinsically disordered Notch2-binding receptor 1 (917 aa).

Residues 1–892 (MEANQEASLF…AEFRRAKVCK (892 aa)) lie on the Cytoplasmic side of the membrane. Disordered regions lie at residues 337–367 (STYF…WPAK), 389–410 (SEEK…GPDR), 457–476 (DKSI…SVGT), 568–588 (ITNG…NVHH), 652–679 (SEAP…LENS), 706–727 (TRPS…IASI), and 746–783 (NEEE…LPKQ). The segment covering 460-476 (ISCTSGQHSSDTSSVGT) has biased composition (polar residues). The segment covering 576 to 588 (KGDKCNRPENVHH) has biased composition (basic and acidic residues). The residue at position 712 (serine 712) is a Phosphoserine. A helical transmembrane segment spans residues 893–913 (IAALITAAACTVILVIVVPIC). The Extracellular portion of the chain corresponds to 914 to 917 (TMKS).

It belongs to the MINAR family. As to quaternary structure, interacts with NOTCH2; this interaction increases MINAR1 stability. Interacts (via N-terminus) with DEPTOR (via PDZ domain); this interaction may stabilize DEPTOR protein by impairing its ubiquitination.

The protein localises to the cell membrane. In terms of biological role, intrinsically disordered protein which may negatively regulate mTOR signaling pathway by stabilizing the mTOR complex component DEPTOR. Negatively regulates angiogenesis. Negatively regulates cell growth. Negatively regulates neurite outgrowth in hippocampal neurons. This chain is Major intrinsically disordered Notch2-binding receptor 1 (Minar1), found in Rattus norvegicus (Rat).